The following is a 426-amino-acid chain: C4-dicarboxylate transport protein (426 aa).

8 helical membrane passes run 8–28 (VLYV…HFYP), 44–64 (LIKM…IAGM), 78–98 (LLYF…ATHL), 148–168 (GEIL…AHVG), 184–204 (ILFG…FGAM), 222–242 (LIGT…GFIA), 297–317 (GYSF…LFIA), and 355–375 (AATL…ILGI).

It belongs to the dicarboxylate/amino acid:cation symporter (DAACS) (TC 2.A.23) family.

It is found in the cell inner membrane. Responsible for the transport of dicarboxylates such as succinate, fumarate, and malate from the periplasm across the membrane. The sequence is that of C4-dicarboxylate transport protein from Paraburkholderia phymatum (strain DSM 17167 / CIP 108236 / LMG 21445 / STM815) (Burkholderia phymatum).